The following is a 120-amino-acid chain: Spermidine export protein MdtJ (120 aa).

4 helical membrane-spanning segments follow: residues 1-21 (MFYWILLALAIATEITGTLSM), 31-51 (AGFILMLVMITLSYIFLSFAV), 54-74 (IALGVAYALWEGIGILFITIF), and 81-101 (EALSTMKIAGLLTLVAGIVLI).

It belongs to the drug/metabolite transporter (DMT) superfamily. Small multidrug resistance (SMR) (TC 2.A.7.1) family. MdtJ subfamily. In terms of assembly, forms a complex with MdtI.

Its subcellular location is the cell inner membrane. Catalyzes the excretion of spermidine. The polypeptide is Spermidine export protein MdtJ (Salmonella agona (strain SL483)).